The following is a 269-amino-acid chain: uncharacterized protein (269 aa).

5 consecutive transmembrane segments (helical) span residues 65–85 (FSLFLTIVMIINLLFGSLFVM), 156–176 (VTSVLLAACRVCLNLMLISMV), 182–202 (YTRILLCIISYGMMIFVWLGF), 206–226 (MMSFMLATWLFAYNIVLNDFW), and 242–262 (TLSAIGGLLLLIHTGPGEFSF). The Di-lysine motif motif lies at 266–269 (KKKW).

It belongs to the SURF4 family.

Its subcellular location is the membrane. This is an uncharacterized protein from Caenorhabditis elegans.